Reading from the N-terminus, the 283-residue chain is Thymidylate synthase (283 aa).

Arg22 is a binding site for dUMP. The Nucleophile role is filled by Cys160. DUMP is bound by residues 180-183 (RSCD), Asn191, and 221-223 (HIY). Residue Asp183 coordinates (6R)-5,10-methylene-5,6,7,8-tetrahydrofolate. Ala282 provides a ligand contact to (6R)-5,10-methylene-5,6,7,8-tetrahydrofolate.

Belongs to the thymidylate synthase family. Bacterial-type ThyA subfamily. As to quaternary structure, homodimer.

It localises to the cytoplasm. It carries out the reaction dUMP + (6R)-5,10-methylene-5,6,7,8-tetrahydrofolate = 7,8-dihydrofolate + dTMP. It participates in pyrimidine metabolism; dTTP biosynthesis. Functionally, catalyzes the reductive methylation of 2'-deoxyuridine-5'-monophosphate (dUMP) to 2'-deoxythymidine-5'-monophosphate (dTMP) while utilizing 5,10-methylenetetrahydrofolate (mTHF) as the methyl donor and reductant in the reaction, yielding dihydrofolate (DHF) as a by-product. This enzymatic reaction provides an intracellular de novo source of dTMP, an essential precursor for DNA biosynthesis. In Idiomarina loihiensis (strain ATCC BAA-735 / DSM 15497 / L2-TR), this protein is Thymidylate synthase.